A 190-amino-acid chain; its full sequence is MGDSDRDSGGGQNGNNQNGQSSLSPREQDRFLPIANVSRIMKKALPANAKISKDAKETMQECVSEFISFVTGEASDKCQKEKRKTINGDDLLWAMTTLGFEDYVEPLKVYLQRFREIEGERTGLGRPQTGGEVGEHQRDAVGDGGGFYGGGGGMQYHQHHQFLHQQNHMYGATGGGSDSGGGAASGRTRT.

A disordered region spans residues M1–R30. A DNA-binding region spans residues L32–S38. Residues M59–V70 are subunit association domain (SAD). The disordered stretch occupies residues H168–T190. A compositionally biased stretch (gly residues) spans A172–A184.

This sequence belongs to the NFYB/HAP3 subunit family. Heterotrimeric transcription factor composed of three components, NF-YA, NF-YB and NF-YC. NF-YB and NF-YC must interact and dimerize for NF-YA association and DNA binding. Binds directly with DPB3-1. In terms of tissue distribution, ubiquitous. Predominantly expressed in flowers and siliques.

It is found in the nucleus. Its function is as follows. Component of the NF-Y/HAP transcription factor complex. The NF-Y complex stimulates the transcription of various genes by recognizing and binding to a CCAAT motif in promoters. The chain is Nuclear transcription factor Y subunit B-2 from Arabidopsis thaliana (Mouse-ear cress).